Reading from the N-terminus, the 288-residue chain is Protoheme IX farnesyltransferase (288 aa).

Transmembrane regions (helical) follow at residues 16 to 36 (VWSL…NRFT), 37 to 57 (LTNI…SMGA), 88 to 108 (VKGL…LLFF), 111 to 131 (YLAA…YSYL), 138 to 158 (WNII…WYTV), 162 to 182 (FSVL…IHVW), 210 to 230 (AICI…PVFF), 236 to 256 (TYMI…VLFV), and 265 to 285 (LKLF…VLIF).

It belongs to the UbiA prenyltransferase family. Protoheme IX farnesyltransferase subfamily.

The protein resides in the cell membrane. It carries out the reaction heme b + (2E,6E)-farnesyl diphosphate + H2O = Fe(II)-heme o + diphosphate. It participates in porphyrin-containing compound metabolism; heme O biosynthesis; heme O from protoheme: step 1/1. Its function is as follows. Converts heme B (protoheme IX) to heme O by substitution of the vinyl group on carbon 2 of heme B porphyrin ring with a hydroxyethyl farnesyl side group. The chain is Protoheme IX farnesyltransferase from Thermoplasma volcanium (strain ATCC 51530 / DSM 4299 / JCM 9571 / NBRC 15438 / GSS1).